A 196-amino-acid polypeptide reads, in one-letter code: Translation initiation factor IF-3 (196 aa).

The protein belongs to the IF-3 family. As to quaternary structure, monomer.

Its subcellular location is the cytoplasm. Its function is as follows. IF-3 binds to the 30S ribosomal subunit and shifts the equilibrium between 70S ribosomes and their 50S and 30S subunits in favor of the free subunits, thus enhancing the availability of 30S subunits on which protein synthesis initiation begins. In Wigglesworthia glossinidia brevipalpis, this protein is Translation initiation factor IF-3.